The chain runs to 112 residues: uncharacterized protein (112 aa).

Phosphoserine is present on residues S51 and S53. The chain crosses the membrane as a helical span at residues 90 to 110 (FIFTLSMFLIAFILLIAFVSF).

Its subcellular location is the golgi apparatus membrane. It is found in the endoplasmic reticulum membrane. This is an uncharacterized protein from Schizosaccharomyces pombe (strain 972 / ATCC 24843) (Fission yeast).